A 239-amino-acid chain; its full sequence is Enolase-phosphatase E1 (239 aa).

This sequence belongs to the HAD-like hydrolase superfamily. MasA/MtnC family. In terms of assembly, monomer. Requires Mg(2+) as cofactor.

It carries out the reaction 5-methylsulfanyl-2,3-dioxopentyl phosphate + H2O = 1,2-dihydroxy-5-(methylsulfanyl)pent-1-en-3-one + phosphate. Its pathway is amino-acid biosynthesis; L-methionine biosynthesis via salvage pathway; L-methionine from S-methyl-5-thio-alpha-D-ribose 1-phosphate: step 3/6. It participates in amino-acid biosynthesis; L-methionine biosynthesis via salvage pathway; L-methionine from S-methyl-5-thio-alpha-D-ribose 1-phosphate: step 4/6. In terms of biological role, bifunctional enzyme that catalyzes the enolization of 2,3-diketo-5-methylthiopentyl-1-phosphate (DK-MTP-1-P) into the intermediate 2-hydroxy-3-keto-5-methylthiopentenyl-1-phosphate (HK-MTPenyl-1-P), which is then dephosphorylated to form the acireductone 1,2-dihydroxy-3-keto-5-methylthiopentene (DHK-MTPene). The polypeptide is Enolase-phosphatase E1 (Streptomyces avermitilis (strain ATCC 31267 / DSM 46492 / JCM 5070 / NBRC 14893 / NCIMB 12804 / NRRL 8165 / MA-4680)).